The primary structure comprises 661 residues: MSERYSHIIQALGQSTFDKIQTCKILVVGAGGIGCELLKNLVLTGFKNIDIIDLDTIDISNLNRQFLFRKQHIGMSKAKIAKESVMKYNEQVNITAHHGDVKSSEFGSEFFKQFDLVMNALDNISARRHVNRLCLSVDVPMIESGTAGYLGQVSVIRKGKTECFECQPIAVPKQFAVCTIRTNPSAPIHCIVWAKMLFGKLFGPKDDDGGGDSSSLTDLDNNIIHGTEELGNIKRDEQLLIEKEKGFKRWVFHKIFHTDIETLIHMPDLWKDKQPPTSLKLDEILSSKEVSQAEEEGDQLIFKLPDQKQWTFKENVEVFLDCLEKLKQQFDQSNSKPMTWDKDDELALSFVCSASNIRSKIFGIPMKSRFDVKSMAGNIIPAIATTNAVIGGLIVMEAIKVVDGRFDQCLSTYLYQLPSGKRLLMPTQLEPQNPKCFVCNRSFIICRLNTEKTTISQFIDHVLKKSLAVNEPILTVGNDIIYEGGDQDLSKEEIEQRSKIEKKTLATHRLTNDTSLVVEDYNQDFQITITIQHTTDFDEDTKKLKKQQQKEKDQKEGKTTTIEKEEDDKFFEIIGKTSQTTTTTTTTTTTTESDNNSNNNKNNNNNNDVEEDDGFMFIEDQPSSTTTSSATPSISKKRKEIDTNESEDLDSSKKLKSNLQD.

ATP is bound by residues 29-34 (GAGGIG), Asp53, 61-64 (NLNR), Lys77, and 122-127 (DNISAR). Positions 163 and 166 each coordinate Zn(2+). Cys178 functions as the Glycyl thioester intermediate in the catalytic mechanism. Zn(2+) contacts are provided by Cys436 and Cys439. Residues 545–661 (KKQQQKEKDQ…SKKLKSNLQD (117 aa)) are disordered. The span at 548–563 (QQKEKDQKEGKTTTIE) shows a compositional bias: basic and acidic residues. Composition is skewed to low complexity over residues 577–607 (TSQT…NNNN) and 623–634 (SSTTTSSATPSI).

Belongs to the ubiquitin-activating E1 family. Heterodimer of sae1 and sae2. The complex binds sumo via sae2.

Its subcellular location is the nucleus. It participates in protein modification; protein sumoylation. In terms of biological role, the dimeric enzyme acts as an E1 ligase for sumo. It mediates ATP-dependent activation of sumo and formation of a thioester with a conserved cysteine residue on sae2. In Dictyostelium discoideum (Social amoeba), this protein is SUMO-activating enzyme subunit 2 (uba2).